A 267-amino-acid polypeptide reads, in one-letter code: Pro-opiomelanocortin (267 aa).

An N-terminal signal peptide occupies residues Met-1–Gly-26. Phenylalanine amide is present on Phe-87. Disordered regions lie at residues Gly-88–Lys-156 and Lys-215–Thr-242. The N-linked (GlcNAc...) asparagine glycan is linked to Asn-91. Residues Ser-94–Gly-105 show a composition bias toward gly residues. A propeptide spanning residues Glu-109–Asp-133 is cleaved from the precursor. Over residues Arg-131–Arg-143 the composition is skewed to basic and acidic residues. Ser-136 bears the N-acetylserine; in Corticotropin mark. Val-148 is modified (valine amide). The span at Lys-215 to Tyr-237 shows a compositional bias: basic and acidic residues.

Belongs to the POMC family. Specific enzymatic cleavages at paired basic residues yield the different active peptides. In terms of tissue distribution, ACTH and MSH are produced by the pituitary gland.

It localises to the secreted. Stimulates the adrenal glands to release cortisol. Functionally, anorexigenic peptide. Increases the pigmentation of skin by increasing melanin production in melanocytes. Its function is as follows. Increases the pigmentation of skin by increasing melanin production in melanocytes. In terms of biological role, endogenous orexigenic opiate. Endogenous opiate. This chain is Pro-opiomelanocortin (POMC), found in Sus scrofa (Pig).